Consider the following 448-residue polypeptide: Proton extrusion protein PxcA (448 aa).

4 consecutive transmembrane segments (helical) span residues 231–251 (ILLL…FFLI), 323–343 (IDSI…VLVL), 372–392 (LIIL…WEVI), and 408–428 (FNFL…KYWI).

The protein belongs to the CemA family.

It localises to the cell inner membrane. In terms of biological role, required for H(+) efflux immediately after light irradiation to form a rapid H(+) concentration gradient across the thylakoid membranes. Together with PxcL, contributes to transient H(+) uptake following dark to light transition. This chain is Proton extrusion protein PxcA, found in Rippkaea orientalis (strain PCC 8801 / RF-1) (Cyanothece sp. (strain PCC 8801)).